The primary structure comprises 344 residues: F17a-G fimbrial adhesin (344 aa).

The signal sequence occupies residues Met-1–Ala-22. A receptor-binding lectin domain region spans residues Ala-23–Thr-199. A carbohydrate-binding positions include Ala-65–Asn-66, Asp-110–Thr-111, and Ser-139–Gly-142. Residues Cys-75 and Cys-132 are joined by a disulfide bond. The tract at residues Val-200–Gln-344 is fimbrillin-binding domain. Residues Leu-288 to Gly-308 form a disordered region. Over residues Asn-299 to Gly-308 the composition is skewed to polar residues.

Belongs to the fimbrial protein family.

The protein localises to the fimbrium. In terms of biological role, essential fimbrial adhesion factor that mediates binding to N-acetylglucosamine-containing receptors in the host intestinal microvilli, leading to colonization of the intestinal tissue, and diarrhea or septicemia. Also confers adhesiveness to laminin and basement membranes. This chain is F17a-G fimbrial adhesin (f17aG), found in Escherichia coli.